The sequence spans 218 residues: Adenylate kinase (218 aa).

10 to 15 (GAGKGT) is a binding site for ATP. An NMP region spans residues 30 to 59 (STGDMLRAAVKAGTPLGLEAKKVMDAGGLV). AMP is bound by residues T31, R36, 57–59 (GLV), 85–88 (GFPR), and Q92. The interval 122 to 159 (GRRVHVASGRTYHVKFNPPKVAGKDDETGEDLIQRADD) is LID. Residues R123 and 132-133 (TY) each bind ATP. Residues R156 and R167 each contribute to the AMP site. G203 lines the ATP pocket.

The protein belongs to the adenylate kinase family. In terms of assembly, monomer.

The protein localises to the cytoplasm. The catalysed reaction is AMP + ATP = 2 ADP. Its pathway is purine metabolism; AMP biosynthesis via salvage pathway; AMP from ADP: step 1/1. Functionally, catalyzes the reversible transfer of the terminal phosphate group between ATP and AMP. Plays an important role in cellular energy homeostasis and in adenine nucleotide metabolism. This is Adenylate kinase from Laribacter hongkongensis (strain HLHK9).